The primary structure comprises 459 residues: Cysteine--tRNA ligase (459 aa).

Cys28 contributes to the Zn(2+) binding site. The 'HIGH' region signature appears at 30-40; it reads VTIYDLCHIGH. Zn(2+) contacts are provided by Cys209, His234, and Glu238. A 'KMSKS' region motif is present at residues 266–270; it reads KMSKS. An ATP-binding site is contributed by Lys269.

It belongs to the class-I aminoacyl-tRNA synthetase family. As to quaternary structure, monomer. Zn(2+) serves as cofactor.

Its subcellular location is the cytoplasm. The catalysed reaction is tRNA(Cys) + L-cysteine + ATP = L-cysteinyl-tRNA(Cys) + AMP + diphosphate. The sequence is that of Cysteine--tRNA ligase from Shewanella baltica (strain OS195).